The sequence spans 109 residues: Small ribosomal subunit protein eS25 (109 aa).

The segment covering 1–13 (MVKKIQESKEKKA) has biased composition (basic and acidic residues). The segment at 1 to 34 (MVKKIQESKEKKALKAASGTRKDKKKWGDGRKKE) is disordered.

Belongs to the eukaryotic ribosomal protein eS25 family.

The chain is Small ribosomal subunit protein eS25 (RPS25-1) from Encephalitozoon cuniculi (strain GB-M1) (Microsporidian parasite).